Reading from the N-terminus, the 202-residue chain is MKDLTEKQEFVLQYISDTVREKGFPPTIREIGDQFGITAKGAYDHLKAIEKKGYIRTSKNQSRAIELLKGNADEALLVRASGIPLLGQVAAGAPILAEENIEEYIAVPDDLATKPGTFALRVKGDSMVEAGISDGDIAIIQKKDTARNGEIVVALIENEATLKVFFKEPDMIRLEPRNAKLKPIRTKKATIIGKLIGLYRIY.

A DNA-binding region (H-T-H motif) is located at residues 28-47 (IREIGDQFGITAKGAYDHLK). Catalysis depends on for autocatalytic cleavage activity residues S126 and K163.

It belongs to the peptidase S24 family. As to quaternary structure, homodimer.

It catalyses the reaction Hydrolysis of Ala-|-Gly bond in repressor LexA.. Represses a number of genes involved in the response to DNA damage (SOS response), including recA and lexA. In the presence of single-stranded DNA, RecA interacts with LexA causing an autocatalytic cleavage which disrupts the DNA-binding part of LexA, leading to derepression of the SOS regulon and eventually DNA repair. The polypeptide is LexA repressor (Leptospira biflexa serovar Patoc (strain Patoc 1 / Ames)).